The following is a 363-amino-acid chain: Homeobox protein Hox-A2 (363 aa).

Disordered stretches follow at residues 23–133 (TSFP…SRRL) and 183–216 (MKHKRQTQCKENQNGDGKFKNLEDSGQTEDDEEK). Polar residues-rich tracts occupy residues 31-46 (TFQSSSIKNSTLSHST) and 55-78 (TIPSLNPSSHPRQSRPKQSPNGTS). The Antp-type hexapeptide motif lies at 88–93 (EYPWMK). The segment at residues 130–189 (SRRLRTAYTNTQLLELEKEFHFNKYLCRPRRVEIAALLDLTERQVKVWFQNRRMKHKRQT) is a DNA-binding region (homeobox).

The protein belongs to the Antp homeobox family. Proboscipedia subfamily.

The protein localises to the nucleus. In terms of biological role, sequence-specific transcription factor which is part of a developmental regulatory system that provides cells with specific positional identities on the anterior-posterior axis. The chain is Homeobox protein Hox-A2 (HOXA2) from Heterodontus francisci (Horn shark).